The primary structure comprises 445 residues: Enolase 1 (445 aa).

Substrate is bound by residues His-164 and Glu-173. Glu-216 acts as the Proton donor in catalysis. The Mg(2+) site is built by Asp-251, Glu-301, and Asp-328. Substrate is bound by residues Glu-301 and Asp-328. The Proton acceptor role is filled by Lys-353. Residues 380-383 (SHRS) and Lys-404 each bind substrate.

Belongs to the enolase family. Homodimer. Mg(2+) is required as a cofactor.

It localises to the cytoplasm. It catalyses the reaction (2R)-2-phosphoglycerate = phosphoenolpyruvate + H2O. It participates in carbohydrate degradation; glycolysis; pyruvate from D-glyceraldehyde 3-phosphate: step 4/5. The protein is Enolase 1 (ENO1) of Hevea brasiliensis (Para rubber tree).